A 159-amino-acid chain; its full sequence is U-actitoxin-Avd13a/b (159 aa).

An N-terminal signal peptide occupies residues 1–18 (MKSIFLVFFAVCLVKAEA). Residues 19–26 (GKGRKREP) constitute a propeptide that is removed on maturation. Disulfide bonds link Cys33/Cys45 and Cys36/Cys52. A propeptide spanning residues 59–60 (EP) is cleaved from the precursor. 2 cysteine pairs are disulfide-bonded: Cys67–Cys79 and Cys70–Cys86. A propeptide spanning residues 93 to 94 (EP) is cleaved from the precursor. Intrachain disulfides connect Cys101–Cys113 and Cys104–Cys120. Residues 127 to 128 (EP) constitute a propeptide that is removed on maturation. 2 disulfides stabilise this stretch: Cys135/Cys147 and Cys138/Cys154.

Belongs to the sea anemone BBH family.

Its subcellular location is the secreted. It localises to the nematocyst. Its function is as follows. Inhibits ion channels. This chain is U-actitoxin-Avd13a/b, found in Anemonia viridis (Snakelocks anemone).